Consider the following 320-residue polypeptide: Malate dehydrogenase (320 aa).

Residues Gly-10 to Gly-15 and Asp-34 contribute to the NAD(+) site. Residues Arg-83 and Arg-89 each contribute to the substrate site. NAD(+)-binding positions include Asn-96 and Ile-119–Asn-121. Residues Asn-121 and Arg-152 each contribute to the substrate site. His-176 (proton acceptor) is an active-site residue.

This sequence belongs to the LDH/MDH superfamily. MDH type 3 family.

It carries out the reaction (S)-malate + NAD(+) = oxaloacetate + NADH + H(+). Its function is as follows. Catalyzes the reversible oxidation of malate to oxaloacetate. This Brucella canis (strain ATCC 23365 / NCTC 10854 / RM-666) protein is Malate dehydrogenase.